The primary structure comprises 567 residues: Pyrethroid hydrolase Ces2e (567 aa).

The N-terminal stretch at 1 to 36 is a signal peptide; it reads MAQTRAWKSIMPLESLPGWLNAVVWGLLLLFCQVQG. A Pyrrolidone carboxylic acid modification is found at Gln-37. Cysteines 105 and 132 form a disulfide. The active-site Acyl-ester intermediate is Ser-237. An intrachain disulfide couples Cys-289 to Cys-300. Residues Glu-354 and His-465 each act as charge relay system in the active site.

The protein belongs to the type-B carboxylesterase/lipase family. As to expression, expressed in liver.

It is found in the microsome. It carries out the reaction all-trans-retinyl hexadecanoate + H2O = all-trans-retinol + hexadecanoate + H(+). It catalyses the reaction (-)-trans-permethrin + H2O = (3-phenoxyphenyl)methanol + (1S,3R)-3-(2,2-dichlorovinyl)-2,2-dimethylcyclopropanecarboxylate + H(+). Its function is as follows. Carboxylesterase that catalyzes the hydrolysis of pyrethroids pesticides. Hydrolyzes trans-permethrin at a rate about 22-fold higher than cis-permethrin. Also hydrolyzes trans-cypermethrin. Hydrolyzes retinyl esters. This Rattus norvegicus (Rat) protein is Pyrethroid hydrolase Ces2e.